Reading from the N-terminus, the 436-residue chain is D-aminoacyl-tRNA deacylase (436 aa).

This sequence belongs to the DtdA deacylase family. As to quaternary structure, monomer. It depends on Zn(2+) as a cofactor.

The catalysed reaction is a D-aminoacyl-tRNA + H2O = a tRNA + a D-alpha-amino acid + H(+). It carries out the reaction glycyl-tRNA(Ala) + H2O = tRNA(Ala) + glycine + H(+). In terms of biological role, D-aminoacyl-tRNA deacylase with broad substrate specificity. By recycling D-aminoacyl-tRNA to D-amino acids and free tRNA molecules, this enzyme counteracts the toxicity associated with the formation of D-aminoacyl-tRNA entities in vivo. The protein is D-aminoacyl-tRNA deacylase of Methanoregula boonei (strain DSM 21154 / JCM 14090 / 6A8).